A 6269-amino-acid polypeptide reads, in one-letter code: Nonribosomal peptide synthetase 1 (6269 aa).

The tract at residues 249–781 (ENDWSRVCSF…VSGKLDRKSI (533 aa)) is adenylation 1. A Carrier 1 domain is found at 803–879 (RAANSTEDQL…ELATRVKGVT (77 aa)). Residue Ser840 is modified to O-(pantetheine 4'-phosphoryl)serine. Residues 894–1342 (LSPIQKLHFM…TLSDFPMLSL (449 aa)) form an epimerase 1 region. The interval 1373–1775 (SRMQQGILLS…FLQSLENIIH (403 aa)) is condensation 1. Residues 1725-2333 (HDPAEFPVYV…TGLLDRWFLR (609 aa)) form an adenylation 2 region. A disordered region spans residues 2364-2386 (KPSPSQLLPSSTSATHRSSGTST). Positions 2367–2376 (PSQLLPSSTS) are enriched in low complexity. A compositionally biased stretch (polar residues) spans 2377-2386 (ATHRSSGTST). Residues 2597–2670 (WRKYLADVES…TGSEEVCYGY (74 aa)) form a condensation 2 region. The tract at residues 2845 to 3368 (RCAHEIIEQQ…SGKLDRKKLR (524 aa)) is adenylation 3. Residues 3392-3468 (ASDEGVEGTL…NMAKRCGMLQ (77 aa)) form the Carrier 2 domain. O-(pantetheine 4'-phosphoryl)serine is present on Ser3429. A condensation 3 region spans residues 3512 to 3898 (CSPVQEGLLT…GQFSFVLEQL (387 aa)). Positions 3919-4454 (DSKEVALWNK…VSGKLDRKKI (536 aa)) are adenylation 4. Residues 4487 to 4563 (EDKSTAAKIL…ELIQAAEVET (77 aa)) enclose the Carrier 3 domain. Ser4524 is subject to O-(pantetheine 4'-phosphoryl)serine. Positions 4578–5024 (LSPIQNLYFK…DFPLLPITYD (447 aa)) are epimerase 2. Residues 5052-5466 (SSVQEGILLS…PSQLVSELDL (415 aa)) are condensation 4. The region spanning 5552 to 5628 (SKLMEPEKRL…DMLAAISASN (77 aa)) is the Carrier 4 domain. Residue Ser5589 is modified to O-(pantetheine 4'-phosphoryl)serine. Positions 5628–5658 (NSSSALEPDSPADSNNEKPAEPPRLVELERN) are disordered. Residues 5642-5657 (NNEKPAEPPRLVELER) show a composition bias toward basic and acidic residues. Residues 5720 to 6067 (FFFDGRGSLD…SSSDGKLGVS (348 aa)) form a condensation 5 region. A Carrier 5 domain is found at 6139 to 6220 (SDILVHSDVV…GQMAVLTLHN (82 aa)).

Belongs to the NRP synthetase family. Post-translationally, the thiolation domains are 4'-phosphopantetheinylated.

Functionally, nonribosomal peptide synthesis (NRPS) is a key mechanism responsible for the biosynthesis of bioactive metabolites which are potentially contributing to organismal virulence. Contributes to improved fungal tolerance against oxidative stress, during the infection process. In Aspergillus fumigatus (strain ATCC MYA-4609 / CBS 101355 / FGSC A1100 / Af293) (Neosartorya fumigata), this protein is Nonribosomal peptide synthetase 1 (NRPS1).